The following is a 137-amino-acid chain: uncharacterized protein (137 aa).

4 helical membrane-spanning segments follow: residues 20–39, 44–61, 86–105, and 109–131; these read YGKIGVATAMAVGAAVGYAV, WFITVIAVLAGVALLSLV, VEIFSIGAALSGAVMLALDL, and AALALEFAVCCVLVLYLIFYGYY.

It is found in the cell membrane. This is an uncharacterized protein from Archaeoglobus fulgidus (strain ATCC 49558 / DSM 4304 / JCM 9628 / NBRC 100126 / VC-16).